A 537-amino-acid polypeptide reads, in one-letter code: Probable E3 ubiquitin-protein ligase ARI3 (537 aa).

Residues 1 to 30 are disordered; that stretch reads MDDDYMMLDDDYGEEEDENYSEDDNYSEAE. Residues 117–331 are TRIAD supradomain; it reads KTMKCDVCME…IAGHSCGRYK (215 aa). Residues Cys121, Cys124, Cys139, His141, Cys144, Cys147, Cys166, Cys171, Cys210, Cys216, Cys234, Cys236, Cys241, Cys244, His249, Cys254, Cys281, and Cys284 each contribute to the Zn(2+) site. The segment at 121 to 171 adopts an RING-type 1 zinc-finger fold; it reads CDVCMEDDLPSNVMTRMECGHRFCNDCWIGHFTVKINEGESKRILCMAHEC. The segment at 190 to 254 adopts an IBR-type zinc-finger fold; the sequence is DRYDRFLIES…LSESHSPCSC (65 aa). The RING-type 2; atypical zinc finger occupies 281–309; that stretch reads CPKCSKPIQKRDGCNLMTCKCGQHFCWLC. Cys294 is a catalytic residue. Cys299, Cys301, Cys306, Cys309, His317, and Cys327 together coordinate Zn(2+).

It belongs to the RBR family. Ariadne subfamily. Zn(2+) serves as cofactor. As to expression, ubiquitous.

It carries out the reaction [E2 ubiquitin-conjugating enzyme]-S-ubiquitinyl-L-cysteine + [acceptor protein]-L-lysine = [E2 ubiquitin-conjugating enzyme]-L-cysteine + [acceptor protein]-N(6)-ubiquitinyl-L-lysine.. Its pathway is protein modification; protein ubiquitination. Its function is as follows. Might act as an E3 ubiquitin-protein ligase, or as part of E3 complex, which accepts ubiquitin from specific E2 ubiquitin-conjugating enzymes and then transfers it to substrates. In Arabidopsis thaliana (Mouse-ear cress), this protein is Probable E3 ubiquitin-protein ligase ARI3 (ARI3).